The following is a 315-amino-acid chain: ADP/ATP translocase 4 (315 aa).

The Mitochondrial intermembrane segment spans residues Met-1–Ser-19. One copy of the Solcar 1 repeat lies at Ser-18–Leu-110. A helical transmembrane segment spans residues Phe-20 to Gln-49. Topologically, residues Val-50–Asn-86 are mitochondrial matrix. The chain crosses the membrane as a helical span at residues Leu-87–Phe-111. Residues Arg-92 and Lys-104 each coordinate ADP. At Met-112 to Phe-121 the chain is on the mitochondrial intermembrane side. A helical transmembrane segment spans residues Trp-122–Val-142. Solcar repeat units lie at residues Arg-123–Leu-213 and Thr-220–Phe-307. Residues Val-143 to Gly-190 lie on the Mitochondrial matrix side of the membrane. The helical transmembrane segment at Val-191–Lys-211 threads the bilayer. Over Gly-212 to Phe-222 the chain is Mitochondrial intermembrane. A helical transmembrane segment spans residues Leu-223–Phe-243. Residues Asp-244–Gly-283 lie on the Mitochondrial matrix side of the membrane. Arg-247 contributes to the ADP binding site. The tract at residues Arg-247–Met-252 is important for transport activity. The Nucleotide carrier signature motif motif lies at Arg-247–Met-252. Residues Ala-284–Tyr-301 form a helical membrane-spanning segment. Topologically, residues Asp-302–Arg-315 are mitochondrial intermembrane.

It belongs to the mitochondrial carrier (TC 2.A.29) family. As to quaternary structure, monomer. Expressed in brain, liver, sperm and testis. In testis, expressed at higher level in spermatocytes, while it is expressed at lower level in spermatogonial cells. Expressed in erythrocytes (at protein level).

It localises to the mitochondrion inner membrane. The protein localises to the membrane. Its subcellular location is the cell projection. It is found in the cilium. The protein resides in the flagellum membrane. The catalysed reaction is ADP(in) + ATP(out) = ADP(out) + ATP(in). It catalyses the reaction dATP(out) + ADP(in) = dATP(in) + ADP(out). The enzyme catalyses dADP(in) + ADP(out) = dADP(out) + ADP(in). It carries out the reaction H(+)(in) = H(+)(out). Its activity is regulated as follows. The matrix-open state (m-state) is inhibited by the membrane-permeable bongkrekic acid (BKA). The cytoplasmic-open state (c-state) is inhibited by the membrane-impermeable toxic inhibitor carboxyatractyloside (CATR). Proton transporter activity is inhibited by ADP:ATP antiporter activity. Its function is as follows. ADP:ATP antiporter that mediates import of ADP into the mitochondrial matrix for ATP synthesis, and export of ATP out to fuel the cell. Cycles between the cytoplasmic-open state (c-state) and the matrix-open state (m-state): operates by the alternating access mechanism with a single substrate-binding site intermittently exposed to either the cytosolic (c-state) or matrix (m-state) side of the inner mitochondrial membrane. Specifically required during spermatogenesis, probably to mediate ADP:ATP exchange in spermatocytes. Large ATP supplies from mitochondria may be critical for normal progression of spermatogenesis during early stages of meiotic prophase I, including DNA double-strand break repair and chromosomal synapsis. In addition to its ADP:ATP antiporter activity, also involved in mitochondrial uncoupling and mitochondrial permeability transition pore (mPTP) activity. Plays a role in mitochondrial uncoupling by acting as a proton transporter: proton transport uncouples the proton flows via the electron transport chain and ATP synthase to reduce the efficiency of ATP production and cause mitochondrial thermogenesis. Proton transporter activity is inhibited by ADP:ATP antiporter activity, suggesting that SLC25A31/ANT4 acts as a master regulator of mitochondrial energy output by maintaining a delicate balance between ATP production (ADP:ATP antiporter activity) and thermogenesis (proton transporter activity). Proton transporter activity requires free fatty acids as cofactor, but does not transport it. Among nucleotides, may also exchange ADP for dATP and dADP. Also plays a key role in mPTP opening, a non-specific pore that enables free passage of the mitochondrial membranes to solutes of up to 1.5 kDa, and which contributes to cell death. It is however unclear if SLC25A31/ANT4 constitutes a pore-forming component of mPTP or regulates it. In Homo sapiens (Human), this protein is ADP/ATP translocase 4.